The sequence spans 527 residues: Protein SDS23 (527 aa).

Residues 1-75 (MPQNTRHTSI…TEYSNNNGNS (75 aa)) form a disordered region. At serine 9 the chain carries Phosphoserine. A compositionally biased stretch (polar residues) spans 21-31 (PNSTDLNSLSE). Residues 32–48 (QTDKNTEANKSDTESLH) show a composition bias toward basic and acidic residues. Residues serine 42 and serine 46 each carry the phosphoserine modification. A compositionally biased stretch (low complexity) spans 52–61 (SKSSSSSSLS). CBS domains follow at residues 101 to 162 (VEQN…RIKV), 185 to 243 (LTPK…NARS), 272 to 330 (FKQS…QYPL), and 335 to 391 (CRHF…DNQP). Positions 385 to 481 (QPNDNQPTAS…NCPASPTPAH (97 aa)) are disordered. A compositionally biased stretch (low complexity) spans 391–417 (PTASSEKSSSPSPSTPPVTTLPSLASS). The segment covering 418 to 449 (YHSNTQSSRMANSPVLKSSDTSNNKINVNINL) has biased composition (polar residues). Serine 430 is subject to Phosphoserine. Over residues 450 to 462 (SGPSPSQPQSPSA) the composition is skewed to low complexity.

It belongs to the SDS23 family.

Its subcellular location is the cytoplasm. The protein localises to the nucleus. Functionally, involved in DNA replication and cell separation during budding. In Saccharomyces cerevisiae (strain ATCC 204508 / S288c) (Baker's yeast), this protein is Protein SDS23 (SDS23).